We begin with the raw amino-acid sequence, 231 residues long: MAHVSSRKRSRSRSRSRGRRGSEKRSKRSSKDSSRNCSTSKSQGHKASSTSGVEERSKHKAQRTSRSSSSSSSSSSSSSSSSTSSSSSSDGRKKRGKHKDKKKRKKKKKRKKKMKRKGKEKAVVVHQAEALPGPSLDQWHRSAGEDNDGPVLTDEQKSRIQAMKPMTKEEWDARQSVIRKVVDPETGRTRLIKGDGEVLEEIVTKERHREINKQATRGDGLAFQMRAGLLP.

The segment covering 1–19 (MAHVSSRKRSRSRSRSRGR) has biased composition (basic residues). Positions 1 to 154 (MAHVSSRKRS…EDNDGPVLTD (154 aa)) are disordered. Over residues 20–34 (RGSEKRSKRSSKDSS) the composition is skewed to basic and acidic residues. Residues 64 to 89 (TSRSSSSSSSSSSSSSSSSTSSSSSS) are compositionally biased toward low complexity. Basic residues predominate over residues 92-119 (RKKRGKHKDKKKRKKKKKRKKKMKRKGK). Residues serine 142 and serine 176 each carry the phosphoserine modification. Lysine 193 is covalently cross-linked (Glycyl lysine isopeptide (Lys-Gly) (interchain with G-Cter in SUMO2)).

The protein belongs to the ARL6IP4 family. Interacts with ARL6. Interacts with ZCCHC17. Interacts with SRSF2.

The protein resides in the nucleus. It is found in the nucleolus. It localises to the nucleus speckle. Involved in modulating alternative pre-mRNA splicing with either 5' distal site activation or preferential use of 3' proximal site. The sequence is that of ADP-ribosylation factor-like protein 6-interacting protein 4 (Arl6ip4) from Rattus norvegicus (Rat).